A 370-amino-acid polypeptide reads, in one-letter code: DNA replication and repair protein RecF (370 aa).

Residue 30-37 (GENAQGKT) participates in ATP binding.

Belongs to the RecF family. In terms of assembly, recruited to foci following DNA damage; probably interacts with RecO.

The protein localises to the cytoplasm. It is found in the nucleoid. In terms of biological role, the RecF protein is involved in DNA metabolism; it is required for DNA replication and normal SOS inducibility. RecF binds preferentially to single-stranded, linear DNA. It also seems to bind ATP. Is recruited to repair centers, foci that are the site of double-strand DNA break(s) after RecN and RecO; recruitment may depend on RecO. A positive modulator of RecA. The sequence is that of DNA replication and repair protein RecF from Bacillus subtilis (strain 168).